Consider the following 221-residue polypeptide: UPF0502 protein Sputw3181_2381 (221 aa).

Belongs to the UPF0502 family.

This is UPF0502 protein Sputw3181_2381 from Shewanella sp. (strain W3-18-1).